A 248-amino-acid polypeptide reads, in one-letter code: MKFLVLVAFVGVTVAFPISDEDDDKIVGGYSCARSAAPYQVSLNSGYHFCGGSLISSQWVLSAAHCYKSSIQVKLGEYNLAAQDGSEQTISSSKVIRHSGYNANTLNNDIMLIKLSKAATLNSYVNTVPLPTSCVTAGTTCLISGWGNTLSSGSLYPDVLQCLNAPVLSSSQCSSAYPGRITSNMICIGYLNGGKDSCQGDSGGPVVCNGQLQGIVSWGIGCAQKGYPGVYTKVCNYVSWIKTTMSSN.

An N-terminal signal peptide occupies residues 1–15; that stretch reads MKFLVLVAFVGVTVA. Residues 16–25 constitute a propeptide, activation peptide; that stretch reads FPISDEDDDK. The Peptidase S1 domain maps to 26-246; the sequence is IVGGYSCARS…YVSWIKTTMS (221 aa). 6 disulfides stabilise this stretch: C32–C162, C50–C66, C134–C235, C141–C208, C173–C187, and C198–C222. The active-site Charge relay system is the H65. 3 residues coordinate Ca(2+): E77, N79, and E87. D109 acts as the Charge relay system in catalysis. Residue S202 is the Charge relay system of the active site.

The protein belongs to the peptidase S1 family. Ca(2+) serves as cofactor. In terms of tissue distribution, high levels are seen in the pancreas while lower levels are found in the liver, spleen and thymus.

Its subcellular location is the secreted. The protein resides in the extracellular space. The enzyme catalyses Preferential cleavage: Arg-|-Xaa, Lys-|-Xaa.. The protein is Trypsin I-P1 of Gallus gallus (Chicken).